A 20-amino-acid chain; its full sequence is 44 kDa cell wall protein 2 (20 aa).

It is found in the secreted. The protein localises to the cell wall. The protein is 44 kDa cell wall protein 2 of Solanum lycopersicum (Tomato).